Here is a 406-residue protein sequence, read N- to C-terminus: Phosphopentomutase (406 aa).

Mn(2+) contacts are provided by Asp10, Asp305, His310, Asp346, His347, and His358.

Belongs to the phosphopentomutase family. Mn(2+) serves as cofactor.

Its subcellular location is the cytoplasm. The enzyme catalyses 2-deoxy-alpha-D-ribose 1-phosphate = 2-deoxy-D-ribose 5-phosphate. It carries out the reaction alpha-D-ribose 1-phosphate = D-ribose 5-phosphate. It participates in carbohydrate degradation; 2-deoxy-D-ribose 1-phosphate degradation; D-glyceraldehyde 3-phosphate and acetaldehyde from 2-deoxy-alpha-D-ribose 1-phosphate: step 1/2. Isomerase that catalyzes the conversion of deoxy-ribose 1-phosphate (dRib-1-P) and ribose 1-phosphate (Rib-1-P) to deoxy-ribose 5-phosphate (dRib-5-P) and ribose 5-phosphate (Rib-5-P), respectively. The polypeptide is Phosphopentomutase (Sinorhizobium fredii (strain NBRC 101917 / NGR234)).